The following is a 149-amino-acid chain: Protein OPG200 (149 aa).

This sequence belongs to the orthopoxvirus OPG200 family. In terms of assembly, homodimers. Interacts with host IKBKB; this interaction inhibits host NF-kappa-B activation.

Functionally, contributes to virulence by binding to the host IKBKB subunit of the IKK complex and preventing host NF-kappa-B activation in response to pro-inflammatory stimuli such as TNF-alpha or IL1B. Mechanistically, sterically hinders the direct contact between the kinase domains of IKBKB in the IKK complex containing IKBKB, CHUK/IKKA and NEMO. In Vaccinia virus (strain Western Reserve) (VACV), this protein is Protein OPG200 (OPG200).